Consider the following 587-residue polypeptide: MAEKGDCIASVYGYDLGGRFVDFQPLGFGVNGLVLSAVDSRACRKVAVKKIALSDARSMKHALREIKIIRRLDHDNIVKVYEVLGPKGTDLQGELFKFSVAYIVQEYMETDLARLLEQGTLAEEHAKLFMYQLLRGLKYIHSANVLHRDLKPANIFISTEDLVLKIGDFGLARIVDQHYSHKGYLSEGLVTKWYRSPRLLLSPNNYTKAIDMWAAGCILAEMLTGRMLFAGAHELEQMQLILETIPVIREEDKDELLRVMPSFVSSTWEVKRPLRKLLPEVNSEAIDFLEKILTFNPMDRLTAEMGLQHPYMSPYSCPEDEPTSQHPFRIEDEIDDIVLMAANQSQLSNWDTCSSRYPVSLSSDLEWRPDRCQDASEVQRDPRAGSAPLAEDVQVDPRKDSHSSSERFLEQSHSSMERAFEADYGRSCDYKVGSPSYLDKLLWRDNKPHHYSEPKLILDLSHWKQAAGAPPTATGLADTGAREDEPASLFLEIAQWVKSTQGGPEHASPPADDPERRLSASPPGRPAPVDGGASPQFDLDVFISRALKLCTKPEDLPDNKLGDLNGACIPEHPGDLVQTEAFSKERW.

In terms of domain architecture, Protein kinase spans 20–312 (FVDFQPLGFG…AEMGLQHPYM (293 aa)). ATP is bound by residues 26–34 (LGFGVNGLV) and lysine 49. The active-site Proton acceptor is the aspartate 149. Phosphoserine; by PAK1, PAK2 and PAK3 is present on serine 186. Positions 186 to 188 (SEG) match the SEG motif motif. The short motif at 328–333 (FRIEDE) is the FRIEDE motif element. Basic and acidic residues-rich tracts occupy residues 373-383 (QDASEVQRDPR) and 395-413 (VDPR…EQSH). Residues 373–413 (QDASEVQRDPRAGSAPLAEDVQVDPRKDSHSSSERFLEQSH) are disordered. Serine 434 carries the post-translational modification Phosphoserine. The segment at 499-534 (STQGGPEHASPPADDPERRLSASPPGRPAPVDGGAS) is disordered.

It belongs to the protein kinase superfamily. CMGC Ser/Thr protein kinase family. MAP kinase subfamily. As to quaternary structure, homodimer. Heterodimer with ERK3/MAPK6. Interacts with (via FRIEDE motif) MAPKAPK5. Mg(2+) serves as cofactor. In terms of processing, phosphorylated at Ser-186 by PAK1, PAK2 and PAK3 resulting in catalytic activation. Phosphorylated by MAPKAPK5 at other sites. High expression in heart and brain.

The protein localises to the cytoplasm. The protein resides in the nucleus. The catalysed reaction is L-seryl-[protein] + ATP = O-phospho-L-seryl-[protein] + ADP + H(+). The enzyme catalyses L-threonyl-[protein] + ATP = O-phospho-L-threonyl-[protein] + ADP + H(+). Its activity is regulated as follows. Activated by phosphorylation at Ser-186. Its function is as follows. Atypical MAPK protein. Phosphorylates microtubule-associated protein 2 (MAP2) and MAPKAPK5. The precise role of the complex formed with MAPKAPK5 is still unclear, but the complex follows a complex set of phosphorylation events: upon interaction with atypical MAPKAPK5, ERK4/MAPK4 is phosphorylated at Ser-186 and then mediates phosphorylation and activation of MAPKAPK5, which in turn phosphorylates ERK4/MAPK4. May promote entry in the cell cycle. The polypeptide is Mitogen-activated protein kinase 4 (MAPK4) (Homo sapiens (Human)).